The chain runs to 308 residues: MADEKTFRIGFIVLGLFLLSLGTFLMSHDRPQVYGTFYAMGSIMVIGGVLWSMCQCYPKITFVPADSDFQGMLSPKALSLLETGLSEVKSPQPPYVRLWEEAAYDQSLPDFTHIQMKVMGYSEDPRPLLAPELKTGTSSAKEGEPHSAQTWMEAAVVVHRELDEKEGEKSRSQSSPPACSQGSAPLASFHDDLDVGSSEGRSPQPSPPDRDEAHLQVPWASRGPLDRFGDFALIDDTPISEDMGLEGQAQEEALPSKQPWSLRMKEETVQAGAEEPEQEEEDLYYGLPDSPGDPLPDKELGFEPDVQG.

Over 1 to 5 (MADEK) the chain is Cytoplasmic. A regulates channel membrane trafficking and anion conductance region spans residues 1-72 (MADEKTFRIG…VPADSDFQGM (72 aa)). Residues 6-26 (TFRIGFIVLGLFLLSLGTFLM) traverse the membrane as a helical segment. Over 27 to 32 (SHDRPQ) the chain is Extracellular. Residues 33–53 (VYGTFYAMGSIMVIGGVLWSM) form a helical membrane-spanning segment. S-palmitoyl cysteine attachment occurs at residues Cys54 and Cys56. The Cytoplasmic portion of the chain corresponds to 54 to 308 (CQCYPKITFV…ELGFEPDVQG (255 aa)). Phosphoserine is present on residues Ser79 and Ser107. Disordered regions lie at residues 127-149 (PLLA…HSAQ) and 162-308 (LDEK…DVQG). Positions 162 to 171 (LDEKEGEKSR) are enriched in basic and acidic residues. The segment covering 172-183 (SQSSPPACSQGS) has biased composition (polar residues). The span at 274-283 (EEPEQEEEDL) shows a compositional bias: acidic residues. Ser290 bears the Phosphoserine mark.

As to quaternary structure, interacts with CLCNK channels. Forms heteromers with CLCNKA in the thin ascending limb of Henle and with CLCNKB in the thick ascending limb and more distal segments. Post-translationally, palmitoylation is necessary for activation of plasma membrane-inserted CLC-K/barttin channels. Expressed along the distal nephron.

The protein localises to the basolateral cell membrane. Functionally, regulatory subunit of anion-selective CLCNKA:BSND and CLCNKB:BSND heteromeric channels involved in basolateral chloride conductance along the nephron to achieve urine concentration and maintain systemic acid-base homeostasis, and in the stria vascularis of the inner ear to establish the endocochlear potential necessary for normal hearing. Most likely acts as a chaperone that allosterically regulates proper sorting of CLCNKA:BSND and CLCNKB:BSND channels at the basolateral plasma membrane domain and functional switch to ion conducting state. Mediates constitutive opening of channel common gates. This chain is Barttin, found in Rattus norvegicus (Rat).